Here is a 265-residue protein sequence, read N- to C-terminus: Neuronal membrane glycoprotein M6-b (265 aa).

A helical transmembrane segment spans residues 31-51 (GGVPYASLVATILCFSGVALF). The N-linked (GlcNAc...) asparagine glycan is linked to N73. Helical transmembrane passes span 90 to 110 (VIYG…AEGF) and 136 to 156 (FVFL…FSAV). N177 carries an N-linked (GlcNAc...) asparagine glycan. The chain crosses the membrane as a helical span at residues 224–244 (LFIVACAGAGATVIALLIYMM). Phosphoserine is present on S257.

This sequence belongs to the myelin proteolipid protein family. In terms of assembly, interacts with SERT. Neurons and glia; cerebellar Bergmann glia, in glia within white matter tracts of the cerebellum and cerebrum, and in embryonic dorsal root ganglia.

It localises to the cell membrane. May be involved in neural development. Involved in regulation of osteoblast function and bone formation. Involved in matrix vesicle release by osteoblasts; this function seems to involve maintenance of the actin cytoskeleton. May be involved in cellular trafficking of SERT and thereby in regulation of serotonin uptake. The sequence is that of Neuronal membrane glycoprotein M6-b (GPM6B) from Homo sapiens (Human).